We begin with the raw amino-acid sequence, 129 residues long: Phosphoribosyl-AMP cyclohydrolase (129 aa).

Mg(2+) is bound at residue Asp-76. Cys-77 contributes to the Zn(2+) binding site. Residues Asp-78 and Asp-80 each coordinate Mg(2+). Zn(2+)-binding residues include Cys-97 and Cys-104.

It belongs to the PRA-CH family. In terms of assembly, homodimer. Mg(2+) is required as a cofactor. Zn(2+) serves as cofactor.

It is found in the cytoplasm. It carries out the reaction 1-(5-phospho-beta-D-ribosyl)-5'-AMP + H2O = 1-(5-phospho-beta-D-ribosyl)-5-[(5-phospho-beta-D-ribosylamino)methylideneamino]imidazole-4-carboxamide. Its pathway is amino-acid biosynthesis; L-histidine biosynthesis; L-histidine from 5-phospho-alpha-D-ribose 1-diphosphate: step 3/9. Its function is as follows. Catalyzes the hydrolysis of the adenine ring of phosphoribosyl-AMP. This chain is Phosphoribosyl-AMP cyclohydrolase, found in Polaromonas sp. (strain JS666 / ATCC BAA-500).